Consider the following 222-residue polypeptide: Ribonuclease 3 (222 aa).

In terms of domain architecture, RNase III spans 3–125 (SQSVAKKLNH…LFGAIYLDAG (123 aa)). Residue E38 coordinates Mg(2+). The active site involves D42. Residues D111 and E114 each coordinate Mg(2+). Residue E114 is part of the active site. The DRBM domain occupies 152–222 (DAKTRLQEWL…AEKALKELLA (71 aa)).

The protein belongs to the ribonuclease III family. As to quaternary structure, homodimer. Mg(2+) is required as a cofactor.

Its subcellular location is the cytoplasm. The catalysed reaction is Endonucleolytic cleavage to 5'-phosphomonoester.. Digests double-stranded RNA. Involved in the processing of primary rRNA transcript to yield the immediate precursors to the large and small rRNAs (23S and 16S). Processes some mRNAs, and tRNAs when they are encoded in the rRNA operon. Processes pre-crRNA and tracrRNA of type II CRISPR loci if present in the organism. This is Ribonuclease 3 from Dechloromonas aromatica (strain RCB).